The primary structure comprises 402 residues: MADDMTQATEAPRNFTINFGPQHPAAHGVLRLVLELDGEVVERVDPHIGLLHRGTEKLLEHKTYLQGIGYFDRLDYVAPMNQEHAFCMAAEKLAGITVPKRGEYVRVLYCEIGRVLNHLLNVTTQAMDVGALTPPLWGFEEREKLMVFYERASGSRMHAHYFRPGGVHQDLPMKLVEDIRAWCDQFPAKLDDIDSLLTENRIFKQRNVDIGVVTKEDVLAWGFSGVMVRGSGLAWDLRRSQPYSVYDELKFDIPVGKNGDCYDRYLCRMEEMRESVKIMIQCCDWLMKDENAGEVLATDSKFSPPRRAEMKRSMEALIQHFKLYTEGVHVEEGETYVAVEAPKGEFGVYLVSDGSNKPYRLKIRAPGFAHLAAMDYMSKGHMLADVSAIIGSLDVVFGEIDR.

The protein belongs to the complex I 49 kDa subunit family. In terms of assembly, NDH-1 is composed of 14 different subunits. Subunits NuoB, C, D, E, F, and G constitute the peripheral sector of the complex.

It localises to the cell inner membrane. The enzyme catalyses a quinone + NADH + 5 H(+)(in) = a quinol + NAD(+) + 4 H(+)(out). Functionally, NDH-1 shuttles electrons from NADH, via FMN and iron-sulfur (Fe-S) centers, to quinones in the respiratory chain. The immediate electron acceptor for the enzyme in this species is believed to be ubiquinone. Couples the redox reaction to proton translocation (for every two electrons transferred, four hydrogen ions are translocated across the cytoplasmic membrane), and thus conserves the redox energy in a proton gradient. The chain is NADH-quinone oxidoreductase subunit D from Maricaulis maris (strain MCS10) (Caulobacter maris).